The primary structure comprises 432 residues: RING finger protein 44 (432 aa).

A disordered region spans residues 1–86 (MRPWALAVTR…GGSPRMLHPA (86 aa)). Positions 56–65 (QQPPSRPPHL) are enriched in pro residues. The RING-type; atypical zinc-finger motif lies at 380-421 (CVVCFSDFEARQLLRVLPCNHEFHTKCVDKWLKANRTCPICR).

This Homo sapiens (Human) protein is RING finger protein 44 (RNF44).